Consider the following 246-residue polypeptide: Transcription factor MYB13 (246 aa).

HTH myb-type domains are found at residues 9–61 and 62–116; these read KIGL…INYL and RPDI…KKRL. 2 DNA-binding regions (H-T-H motif) span residues 37–61 and 89–112; these read WRAL…INYL and WSAI…HTHL.

As to expression, expressed in roots and flowers. Expressed in shoot apex, axillary buds, at the basis of flowers and branching points of inflorescences.

The protein localises to the nucleus. In terms of biological role, plays a regulatory role in meristem function. Functions as component of a regulatory network controlling the establishment and/or development of the shoot system by the regulation of apical meristem function. May play a role in tolerance to boric acid. In Arabidopsis thaliana (Mouse-ear cress), this protein is Transcription factor MYB13.